A 478-amino-acid chain; its full sequence is Zinc metalloproteinase/disintegrin (478 aa).

Residues 1–20 (MIQVLLVTICLAVFPYQGSS) form the signal peptide. The propeptide occupies 21–194 (KTLKSGNVND…KASQLNLTPE (174 aa)). Pyrrolidone carboxylic acid is present on Gln195. In terms of domain architecture, Peptidase M12B spans 201–397 (RYIELVIVAD…RNPQCILNQP (197 aa)). The Ca(2+) site is built by Glu204 and Asp288. 3 cysteine pairs are disulfide-bonded: Cys312/Cys392, Cys352/Cys376, and Cys354/Cys359. His337 is a binding site for Zn(2+). The active site involves Glu338. Residues His341 and His347 each coordinate Zn(2+). Residues Cys392 and Asn395 each contribute to the Ca(2+) site. Residues 398 to 413 (LRTDTVSTPVSGNELL) constitute a propeptide that is removed on maturation. The Disintegrin domain maps to 405-478 (TPVSGNELLQ…SDCPRNPYKD (74 aa)). Intrachain disulfides connect Cys420/Cys443, Cys434/Cys440, Cys439/Cys464, and Cys452/Cys471. The Cell attachment site; atypical (VGD) motif lies at 456–458 (VGD).

The protein belongs to the venom metalloproteinase (M12B) family. P-II subfamily. P-IIe sub-subfamily. In terms of assembly, monomer (metalloproteinase). Heterodimer; disulfide-linked (disintegrin). The cofactor is Zn(2+). Expressed by the venom gland.

It localises to the secreted. Its activity is regulated as follows. Fibrinolytic and caseinolytic activities are inhibited by Cd(2+), Cu(2+) and Co(2+) ions. Not inhibited by Mg(2+), Ca(2+) and Ba(2+). Also inhibited by EDTA, EGTA and 1,10-phenanthroline. Functionally, fibrinolytic and fibrinogenolytic metalloproteinase that hydrolyzes the Aalpha-chain and more slowly the Bbeta-chain of fibrin and fibrinogen. Its fibrinolytic activity is direct, without any plasminogen activation. Also hydrolyzes casein and B-chain of oxidized insulin. Inhibits ADP-induced and collagen-induced platelet aggregation. Shows low hemorrhagic activity. Cleaves the plasma proteinase inhibitors alpha(2)-macroglobulin (A2M) and pregnancy zone protein (PZP), and is inhibited by them. The metalloprotease has no strict P1-P1' specificity requirement. Hydrolysis at sites with a Pro residue at P1 is observed with bradykinin, substance P, PZP and alpha chain fibrinogen (FGA). Its function is as follows. Poor inhibitor of platelet aggregation. The disintegrin inhibits the adhesion of the alpha-4/beta-1 (ITGA4/ITGB1) integrin to VCAM-1. Inhibition on alpha-2b/beta-3 (ITGA2B/ITGB3) is low. This is Zinc metalloproteinase/disintegrin from Macrovipera lebetinus (Levantine viper).